A 227-amino-acid chain; its full sequence is Orotate phosphoribosyltransferase (227 aa).

Position 26 (K26) interacts with 5-phospho-alpha-D-ribose 1-diphosphate. 34–35 (FF) contributes to the orotate binding site. Residues 72 to 73 (YK), R98, K99, K102, H104, and 123 to 131 (DDVVSAGLS) each bind 5-phospho-alpha-D-ribose 1-diphosphate. Positions 127 and 155 each coordinate orotate.

It belongs to the purine/pyrimidine phosphoribosyltransferase family. PyrE subfamily. In terms of assembly, homodimer. Requires Mg(2+) as cofactor.

The enzyme catalyses orotidine 5'-phosphate + diphosphate = orotate + 5-phospho-alpha-D-ribose 1-diphosphate. The protein operates within pyrimidine metabolism; UMP biosynthesis via de novo pathway; UMP from orotate: step 1/2. Functionally, catalyzes the transfer of a ribosyl phosphate group from 5-phosphoribose 1-diphosphate to orotate, leading to the formation of orotidine monophosphate (OMP). The protein is Orotate phosphoribosyltransferase of Nitrosomonas europaea (strain ATCC 19718 / CIP 103999 / KCTC 2705 / NBRC 14298).